The sequence spans 350 residues: Histidinol-phosphate aminotransferase 1 (350 aa).

Lys-209 is subject to N6-(pyridoxal phosphate)lysine.

Belongs to the class-II pyridoxal-phosphate-dependent aminotransferase family. Histidinol-phosphate aminotransferase subfamily. Homodimer. It depends on pyridoxal 5'-phosphate as a cofactor.

It carries out the reaction L-histidinol phosphate + 2-oxoglutarate = 3-(imidazol-4-yl)-2-oxopropyl phosphate + L-glutamate. It participates in amino-acid biosynthesis; L-histidine biosynthesis; L-histidine from 5-phospho-alpha-D-ribose 1-diphosphate: step 7/9. In Bradyrhizobium diazoefficiens (strain JCM 10833 / BCRC 13528 / IAM 13628 / NBRC 14792 / USDA 110), this protein is Histidinol-phosphate aminotransferase 1 (hisC1).